The primary structure comprises 331 residues: Ketol-acid reductoisomerase (NADP(+)) (331 aa).

The region spanning 2–182 (AKMYYDKDAD…GGTRAGVIET (181 aa)) is the KARI N-terminal Rossmann domain. NADP(+) is bound by residues 25–28 (FGSQ), serine 51, serine 53, and 83–86 (DEKQ). The active site involves histidine 108. Glycine 134 provides a ligand contact to NADP(+). The 146-residue stretch at 183–328 (TFKEETETDL…KGLREMMAWI (146 aa)) folds into the KARI C-terminal knotted domain. Mg(2+) is bound by residues aspartate 191, glutamate 195, glutamate 227, and glutamate 231. A substrate-binding site is contributed by serine 252.

Belongs to the ketol-acid reductoisomerase family. Mg(2+) is required as a cofactor.

It catalyses the reaction (2R)-2,3-dihydroxy-3-methylbutanoate + NADP(+) = (2S)-2-acetolactate + NADPH + H(+). It carries out the reaction (2R,3R)-2,3-dihydroxy-3-methylpentanoate + NADP(+) = (S)-2-ethyl-2-hydroxy-3-oxobutanoate + NADPH + H(+). It participates in amino-acid biosynthesis; L-isoleucine biosynthesis; L-isoleucine from 2-oxobutanoate: step 2/4. The protein operates within amino-acid biosynthesis; L-valine biosynthesis; L-valine from pyruvate: step 2/4. Its function is as follows. Involved in the biosynthesis of branched-chain amino acids (BCAA). Catalyzes an alkyl-migration followed by a ketol-acid reduction of (S)-2-acetolactate (S2AL) to yield (R)-2,3-dihydroxy-isovalerate. In the isomerase reaction, S2AL is rearranged via a Mg-dependent methyl migration to produce 3-hydroxy-3-methyl-2-ketobutyrate (HMKB). In the reductase reaction, this 2-ketoacid undergoes a metal-dependent reduction by NADPH to yield (R)-2,3-dihydroxy-isovalerate. The sequence is that of Ketol-acid reductoisomerase (NADP(+)) from Thermoanaerobacter sp. (strain X514).